A 376-amino-acid chain; its full sequence is Palmitoyl-[acyl-carrier-protein] 4-desaturase 2, chloroplastic (376 aa).

The N-terminal 33 residues, methionine 1 to threonine 33, are a transit peptide targeting the chloroplast. Fe cation is bound by residues glutamate 114, glutamate 149, histidine 152, glutamate 202, glutamate 235, and histidine 238.

The protein belongs to the fatty acid desaturase type 2 family. As to quaternary structure, homodimer. Fe(2+) serves as cofactor. Preferentially expressed in the flower labellum.

It is found in the plastid. The protein localises to the chloroplast stroma. The enzyme catalyses hexadecanoyl-[ACP] + 2 reduced [2Fe-2S]-[ferredoxin] + O2 + 2 H(+) = (4Z)-hexadecenoyl-[ACP] + 2 oxidized [2Fe-2S]-[ferredoxin] + 2 H2O. The catalysed reaction is octadecanoyl-[ACP] + 2 reduced [2Fe-2S]-[ferredoxin] + O2 + 2 H(+) = (9Z)-octadecenoyl-[ACP] + 2 oxidized [2Fe-2S]-[ferredoxin] + 2 H2O. It participates in lipid metabolism; fatty acid metabolism. In terms of biological role, converts stearoyl-ACP to oleoyl-ACP by introduction of a cis double bond between carbons 9 and 10 of the acyl chain. Converts palmitoyl-ACP to (4Z)-hexadec-4-enoyl-ACP by introduction of a cis double bond between carbons 4 and 5 of the acyl chain. Catalyzes the desaturation of saturated fatty acid 18:0 and 16:0 to generate 18:1 (delta-9) and 16:1 (delta-4) intermediates, expected to give rise to 9-alkenes and 12-alkenes, respectively. This Ophrys arachnitiformis subsp. archipelagi (Orchid) protein is Palmitoyl-[acyl-carrier-protein] 4-desaturase 2, chloroplastic (SAD2).